Reading from the N-terminus, the 155-residue chain is Small ribosomal subunit protein uS7 (155 aa).

This sequence belongs to the universal ribosomal protein uS7 family. In terms of assembly, part of the 30S ribosomal subunit. Contacts proteins S9 and S11.

One of the primary rRNA binding proteins, it binds directly to 16S rRNA where it nucleates assembly of the head domain of the 30S subunit. Is located at the subunit interface close to the decoding center, probably blocks exit of the E-site tRNA. The sequence is that of Small ribosomal subunit protein uS7 from Chlorobium luteolum (strain DSM 273 / BCRC 81028 / 2530) (Pelodictyon luteolum).